The primary structure comprises 235 residues: Cytochrome c oxidase subunit 2 (235 aa).

Over methionine 1–serine 14 the chain is Mitochondrial intermembrane. A helical membrane pass occupies residues proline 15 to methionine 45. Over leucine 46–glutamine 59 the chain is Mitochondrial matrix. Residues glutamate 60–methionine 87 form a helical membrane-spanning segment. At aspartate 88–isoleucine 235 the chain is on the mitochondrial intermembrane side. Cu cation contacts are provided by histidine 161, cysteine 196, glutamate 198, cysteine 200, histidine 204, and methionine 207. Glutamate 198 lines the Mg(2+) pocket. Residue tyrosine 218 is modified to Phosphotyrosine.

The protein belongs to the cytochrome c oxidase subunit 2 family. Component of the cytochrome c oxidase (complex IV, CIV), a multisubunit enzyme composed of 14 subunits. The complex is composed of a catalytic core of 3 subunits MT-CO1, MT-CO2 and MT-CO3, encoded in the mitochondrial DNA, and 11 supernumerary subunits COX4I, COX5A, COX5B, COX6A, COX6B, COX6C, COX7A, COX7B, COX7C, COX8 and NDUFA4, which are encoded in the nuclear genome. The complex exists as a monomer or a dimer and forms supercomplexes (SCs) in the inner mitochondrial membrane with NADH-ubiquinone oxidoreductase (complex I, CI) and ubiquinol-cytochrome c oxidoreductase (cytochrome b-c1 complex, complex III, CIII), resulting in different assemblies (supercomplex SCI(1)III(2)IV(1) and megacomplex MCI(2)III(2)IV(2)). Found in a complex with TMEM177, COA6, COX18, COX20, SCO1 and SCO2. Interacts with TMEM177 in a COX20-dependent manner. Interacts with COX20. Interacts with COX16. Cu cation is required as a cofactor.

The protein localises to the mitochondrion inner membrane. The catalysed reaction is 4 Fe(II)-[cytochrome c] + O2 + 8 H(+)(in) = 4 Fe(III)-[cytochrome c] + 2 H2O + 4 H(+)(out). Component of the cytochrome c oxidase, the last enzyme in the mitochondrial electron transport chain which drives oxidative phosphorylation. The respiratory chain contains 3 multisubunit complexes succinate dehydrogenase (complex II, CII), ubiquinol-cytochrome c oxidoreductase (cytochrome b-c1 complex, complex III, CIII) and cytochrome c oxidase (complex IV, CIV), that cooperate to transfer electrons derived from NADH and succinate to molecular oxygen, creating an electrochemical gradient over the inner membrane that drives transmembrane transport and the ATP synthase. Cytochrome c oxidase is the component of the respiratory chain that catalyzes the reduction of oxygen to water. Electrons originating from reduced cytochrome c in the intermembrane space (IMS) are transferred via the dinuclear copper A center (CU(A)) of subunit 2 and heme A of subunit 1 to the active site in subunit 1, a binuclear center (BNC) formed by heme A3 and copper B (CU(B)). The BNC reduces molecular oxygen to 2 water molecules using 4 electrons from cytochrome c in the IMS and 4 protons from the mitochondrial matrix. The sequence is that of Cytochrome c oxidase subunit 2 (MT-CO2) from Didelphis virginiana (North American opossum).